We begin with the raw amino-acid sequence, 754 residues long: ATP-dependent zinc metalloprotease FtsH (754 aa).

Topologically, residues 1–9 are cytoplasmic; sequence MKQRMKKPS. A helical membrane pass occupies residues 10–30; sequence LGTFILILILIGILAYVLWQF. The Extracellular portion of the chain corresponds to 31-186; that stretch reads LSPKLGYKSL…FDRPRGNFLS (156 aa). Residues 187–207 traverse the membrane as a helical segment; that stretch reads SFIVPYIPFLLISLFGFWLFF. Residues 208–754 are Cytoplasmic-facing; it reads RLSQNSQAGG…ESKIDSSKEQ (547 aa). An ATP-binding site is contributed by 277-284; sequence GPPGTGKT. Position 499 (histidine 499) interacts with Zn(2+). The active site involves glutamate 500. Zn(2+) contacts are provided by histidine 503 and aspartate 577. The interval 713–754 is disordered; it reads QEKSYENEDQNQNSLEAINYNIDDQDDDKNDSESKIDSSKEQ. Residues 743–754 show a composition bias toward basic and acidic residues; that stretch reads DSESKIDSSKEQ.

It in the central section; belongs to the AAA ATPase family. The protein in the C-terminal section; belongs to the peptidase M41 family. As to quaternary structure, homohexamer. The cofactor is Zn(2+).

The protein localises to the cell membrane. Acts as a processive, ATP-dependent zinc metallopeptidase for both cytoplasmic and membrane proteins. Plays a role in the quality control of integral membrane proteins. The polypeptide is ATP-dependent zinc metalloprotease FtsH (Mesomycoplasma conjunctivae (strain ATCC 25834 / NCTC 10147 / HRC/581) (Mycoplasma conjunctivae)).